The sequence spans 231 residues: Sugar fermentation stimulation protein homolog (231 aa).

Belongs to the SfsA family.

The chain is Sugar fermentation stimulation protein homolog from Geotalea uraniireducens (strain Rf4) (Geobacter uraniireducens).